The sequence spans 249 residues: tRNA pseudouridine synthase A (249 aa).

Asp54 (nucleophile) is an active-site residue. Residue Tyr112 participates in substrate binding.

Belongs to the tRNA pseudouridine synthase TruA family. In terms of assembly, homodimer.

It catalyses the reaction uridine(38/39/40) in tRNA = pseudouridine(38/39/40) in tRNA. Formation of pseudouridine at positions 38, 39 and 40 in the anticodon stem and loop of transfer RNAs. This chain is tRNA pseudouridine synthase A, found in Latilactobacillus sakei subsp. sakei (strain 23K) (Lactobacillus sakei subsp. sakei).